A 114-amino-acid polypeptide reads, in one-letter code: UPF0342 protein OEOE_0901 (114 aa).

This sequence belongs to the UPF0342 family.

The polypeptide is UPF0342 protein OEOE_0901 (Oenococcus oeni (strain ATCC BAA-331 / PSU-1)).